Consider the following 371-residue polypeptide: Zinc transporter ZIP13 (371 aa).

Residues 1-7 (MPGCPCP) lie on the Lumenal side of the membrane. A helical membrane pass occupies residues 8 to 28 (GCGMAGPRLLFLTALALELLE). Residues 29–68 (RAGGSQPALRSRGTATACRLDNKESESWGALLSGERLDTW) are Cytoplasmic-facing. The chain crosses the membrane as a helical span at residues 69-89 (ICSLLGSLMVGLSGVFPLLVI). Topologically, residues 90–108 (PLEMGTMLRSEAGAWRLKQ) are lumenal. A helical membrane pass occupies residues 109–129 (LLSFALGGLLGNVFLHLLPEA). At 130–149 (WAYTCSASPGGEGQSLQQQQ) the chain is on the cytoplasmic side. A helical transmembrane segment spans residues 150 to 170 (QLGLWVIAGILTFLALEKMFL). At 171–235 (DSKEEGTSQA…TIDNFTHGLA (65 aa)) the chain is on the lumenal side. Residues 236 to 256 (VAASFLVSKKIGLLTTMAILL) form a helical membrane-spanning segment. The XEXPHE-motif motif lies at 257 to 262 (HEIPHE). Topologically, residues 257–278 (HEIPHEVGDFAILLRAGFDRWS) are cytoplasmic. A helical transmembrane segment spans residues 279–299 (AAKLQLSTALGGLLGAGFAIC). The Lumenal segment spans residues 300 to 316 (TQSPKGVVGCSPAAEET). A helical membrane pass occupies residues 317-337 (AAWVLPFTSGGFLYIALVNVL). The Cytoplasmic segment spans residues 338-349 (PDLLEEEDPWRS). Residues 350–370 (LQQLLLLCAGIVVMVLFSLFV) traverse the membrane as a helical segment. Residue D371 is a topological domain, lumenal.

Belongs to the ZIP transporter (TC 2.A.5) family. As to quaternary structure, homodimer.

The protein localises to the golgi apparatus membrane. The protein resides in the cytoplasmic vesicle membrane. It is found in the endoplasmic reticulum membrane. It catalyses the reaction Zn(2+)(in) = Zn(2+)(out). In terms of biological role, functions as a zinc transporter transporting Zn(2+) from the Golgi apparatus to the cytosol and thus influences the zinc level at least in areas of the cytosol. May regulate beige adipocyte differentiation. The protein is Zinc transporter ZIP13 of Homo sapiens (Human).